The sequence spans 322 residues: Malate dehydrogenase (322 aa).

Residues 10–15 (GSGQIG) and D34 each bind NAD(+). Substrate contacts are provided by R83 and R89. Residues N96 and 119–121 (ITN) contribute to the NAD(+) site. 2 residues coordinate substrate: N121 and R152. H176 (proton acceptor) is an active-site residue.

It belongs to the LDH/MDH superfamily. MDH type 3 family.

It catalyses the reaction (S)-malate + NAD(+) = oxaloacetate + NADH + H(+). Functionally, catalyzes the reversible oxidation of malate to oxaloacetate. The chain is Malate dehydrogenase from Nitrobacter hamburgensis (strain DSM 10229 / NCIMB 13809 / X14).